A 284-amino-acid chain; its full sequence is MPLAQDAPAKINLGLHVLRRRPDGYHDIETVLHRIDWADTITATPADTLSLTCSDPSLPTDRDNLCLQAAHRLASACDVPAGADLHLEKRVPYGAGLGSGSSDAAATLRLLARLWDVDPTSETLQEIGRTIGADVPFFLQDAPAAYATGRGDTLSPLSKDGASYRLPFSLLIAVPSAEIATPWAYDRVTPAEANRPDLRRLVLSNDLSRWDEALTNDFAPPVTTAIPAVDAARTALRATDAACVSLSGSGSAVYGLFEETAAARAALQSLKPRDLRTHLMPAPN.

Residue Lys-10 is part of the active site. 92–102 contributes to the ATP binding site; sequence PYGAGLGSGSS. The active site involves Asp-134.

The protein belongs to the GHMP kinase family. IspE subfamily.

It catalyses the reaction 4-CDP-2-C-methyl-D-erythritol + ATP = 4-CDP-2-C-methyl-D-erythritol 2-phosphate + ADP + H(+). Its pathway is isoprenoid biosynthesis; isopentenyl diphosphate biosynthesis via DXP pathway; isopentenyl diphosphate from 1-deoxy-D-xylulose 5-phosphate: step 3/6. Functionally, catalyzes the phosphorylation of the position 2 hydroxy group of 4-diphosphocytidyl-2C-methyl-D-erythritol. In Salinibacter ruber (strain DSM 13855 / M31), this protein is 4-diphosphocytidyl-2-C-methyl-D-erythritol kinase.